The primary structure comprises 379 residues: Cobalt-precorrin-5B C(1)-methyltransferase (379 aa).

Belongs to the CbiD family.

It catalyses the reaction Co-precorrin-5B + S-adenosyl-L-methionine = Co-precorrin-6A + S-adenosyl-L-homocysteine. Its pathway is cofactor biosynthesis; adenosylcobalamin biosynthesis; cob(II)yrinate a,c-diamide from sirohydrochlorin (anaerobic route): step 6/10. In terms of biological role, catalyzes the methylation of C-1 in cobalt-precorrin-5B to form cobalt-precorrin-6A. This is Cobalt-precorrin-5B C(1)-methyltransferase from Salmonella heidelberg (strain SL476).